Reading from the N-terminus, the 98-residue chain is NADH-ubiquinone oxidoreductase chain 4L (98 aa).

3 helical membrane-spanning segments follow: residues 1–21 (MPIIYMNITLAFIISLLGMLV), 29–49 (SLLCLEGMMLSLFMMSTLMAL), and 61–81 (IALLVFAACEAAVGLALLVSI).

Belongs to the complex I subunit 4L family. Core subunit of respiratory chain NADH dehydrogenase (Complex I) which is composed of 45 different subunits.

The protein localises to the mitochondrion inner membrane. The enzyme catalyses a ubiquinone + NADH + 5 H(+)(in) = a ubiquinol + NAD(+) + 4 H(+)(out). Functionally, core subunit of the mitochondrial membrane respiratory chain NADH dehydrogenase (Complex I) which catalyzes electron transfer from NADH through the respiratory chain, using ubiquinone as an electron acceptor. Part of the enzyme membrane arm which is embedded in the lipid bilayer and involved in proton translocation. This is NADH-ubiquinone oxidoreductase chain 4L (MT-ND4L) from Piliocolobus badius (Western red colobus).